Here is a 223-residue protein sequence, read N- to C-terminus: Probable chemoreceptor glutamine deamidase CheD (223 aa).

Residues 189–223 (QTASAKAHTPPQIERFSAPAKPRFERFTRPSTATS) are disordered.

Belongs to the CheD family.

It carries out the reaction L-glutaminyl-[protein] + H2O = L-glutamyl-[protein] + NH4(+). Functionally, probably deamidates glutamine residues to glutamate on methyl-accepting chemotaxis receptors (MCPs), playing an important role in chemotaxis. The chain is Probable chemoreceptor glutamine deamidase CheD from Bordetella petrii (strain ATCC BAA-461 / DSM 12804 / CCUG 43448).